We begin with the raw amino-acid sequence, 1171 residues long: ATP-dependent helicase/deoxyribonuclease subunit B (1171 aa).

In terms of domain architecture, UvrD-like helicase ATP-binding spans Met-1–Arg-343. Gly-8–Ser-15 provides a ligand contact to ATP. Residues Met-281–Asp-587 enclose the UvrD-like helicase C-terminal domain. Cys-805, Cys-1129, Cys-1132, and Cys-1138 together coordinate [4Fe-4S] cluster.

It belongs to the helicase family. AddB/RexB type 1 subfamily. In terms of assembly, heterodimer of AddA and AddB. Mg(2+) serves as cofactor. [4Fe-4S] cluster is required as a cofactor.

The heterodimer acts as both an ATP-dependent DNA helicase and an ATP-dependent, dual-direction single-stranded exonuclease. Recognizes the chi site generating a DNA molecule suitable for the initiation of homologous recombination. The AddB subunit has 5' -&gt; 3' nuclease activity but not helicase activity. The sequence is that of ATP-dependent helicase/deoxyribonuclease subunit B from Bacillus anthracis.